The sequence spans 391 residues: Phosphoglycerate kinase (391 aa).

Residues aspartate 21–asparagine 23, arginine 36, histidine 59–arginine 62, arginine 113, and arginine 146 contribute to the substrate site. Residues lysine 197, glutamate 319, and glycine 345–threonine 348 each bind ATP.

The protein belongs to the phosphoglycerate kinase family. Monomer.

It localises to the cytoplasm. The enzyme catalyses (2R)-3-phosphoglycerate + ATP = (2R)-3-phospho-glyceroyl phosphate + ADP. The protein operates within carbohydrate degradation; glycolysis; pyruvate from D-glyceraldehyde 3-phosphate: step 2/5. This is Phosphoglycerate kinase from Xylella fastidiosa (strain Temecula1 / ATCC 700964).